The primary structure comprises 160 residues: SsrA-binding protein (160 aa).

The interval 136–160 (KRDTVRERDSNRELQRAVRNKGKED) is disordered.

It belongs to the SmpB family.

Its subcellular location is the cytoplasm. Its function is as follows. Required for rescue of stalled ribosomes mediated by trans-translation. Binds to transfer-messenger RNA (tmRNA), required for stable association of tmRNA with ribosomes. tmRNA and SmpB together mimic tRNA shape, replacing the anticodon stem-loop with SmpB. tmRNA is encoded by the ssrA gene; the 2 termini fold to resemble tRNA(Ala) and it encodes a 'tag peptide', a short internal open reading frame. During trans-translation Ala-aminoacylated tmRNA acts like a tRNA, entering the A-site of stalled ribosomes, displacing the stalled mRNA. The ribosome then switches to translate the ORF on the tmRNA; the nascent peptide is terminated with the 'tag peptide' encoded by the tmRNA and targeted for degradation. The ribosome is freed to recommence translation, which seems to be the essential function of trans-translation. The protein is SsrA-binding protein of Pseudomonas putida (strain W619).